We begin with the raw amino-acid sequence, 458 residues long: Homogentisate 1,2-dioxygenase (458 aa).

His-308 serves as the catalytic Proton acceptor. Positions 351 and 357 each coordinate Fe cation. Positions 366 and 387 each coordinate homogentisate. Fe cation is bound at residue His-387.

It belongs to the homogentisate dioxygenase family. Hexamer; dimer of trimers. It depends on Fe cation as a cofactor.

It carries out the reaction homogentisate + O2 = 4-maleylacetoacetate + H(+). It participates in amino-acid degradation; L-phenylalanine degradation; acetoacetate and fumarate from L-phenylalanine: step 4/6. Involved in the catabolism of homogentisate (2,5-dihydroxyphenylacetate or 2,5-OH-PhAc), a central intermediate in the degradation of phenylalanine and tyrosine. Catalyzes the oxidative ring cleavage of the aromatic ring of homogentisate to yield maleylacetoacetate. In Xanthomonas axonopodis pv. citri (strain 306), this protein is Homogentisate 1,2-dioxygenase.